The primary structure comprises 200 residues: NADH-quinone oxidoreductase subunit I 1 (200 aa).

2 consecutive 4Fe-4S ferredoxin-type domains span residues leucine 52–alanine 82 and arginine 98–glutamate 127. 8 residues coordinate [4Fe-4S] cluster: cysteine 62, cysteine 65, cysteine 68, cysteine 72, cysteine 107, cysteine 110, cysteine 113, and cysteine 117. The disordered stretch occupies residues threonine 181–alanine 200. Positions lysine 189–alanine 200 are enriched in basic and acidic residues.

Belongs to the complex I 23 kDa subunit family. In terms of assembly, NDH-1 is composed of 14 different subunits. Subunits NuoA, H, J, K, L, M, N constitute the membrane sector of the complex. It depends on [4Fe-4S] cluster as a cofactor.

It is found in the cell membrane. It carries out the reaction a quinone + NADH + 5 H(+)(in) = a quinol + NAD(+) + 4 H(+)(out). Functionally, NDH-1 shuttles electrons from NADH, via FMN and iron-sulfur (Fe-S) centers, to quinones in the respiratory chain. The immediate electron acceptor for the enzyme in this species is believed to be ubiquinone. Couples the redox reaction to proton translocation (for every two electrons transferred, four hydrogen ions are translocated across the cytoplasmic membrane), and thus conserves the redox energy in a proton gradient. The sequence is that of NADH-quinone oxidoreductase subunit I 1 from Streptomyces avermitilis (strain ATCC 31267 / DSM 46492 / JCM 5070 / NBRC 14893 / NCIMB 12804 / NRRL 8165 / MA-4680).